Here is an 846-residue protein sequence, read N- to C-terminus: Leucine--tRNA ligase (846 aa).

The short motif at proline 47–histidine 57 is the 'HIGH' region element. Positions lysine 621–serine 625 match the 'KMSKS' region motif. Lysine 624 lines the ATP pocket.

Belongs to the class-I aminoacyl-tRNA synthetase family.

The protein localises to the cytoplasm. It carries out the reaction tRNA(Leu) + L-leucine + ATP = L-leucyl-tRNA(Leu) + AMP + diphosphate. This Zymomonas mobilis subsp. mobilis (strain ATCC 31821 / ZM4 / CP4) protein is Leucine--tRNA ligase.